We begin with the raw amino-acid sequence, 566 residues long: Arginine--tRNA ligase (566 aa).

The 'HIGH' region signature appears at 121–131; it reads ANPNGPFHIGH.

It belongs to the class-I aminoacyl-tRNA synthetase family.

It is found in the cytoplasm. The catalysed reaction is tRNA(Arg) + L-arginine + ATP = L-arginyl-tRNA(Arg) + AMP + diphosphate. The polypeptide is Arginine--tRNA ligase (Methanococcus maripaludis (strain DSM 14266 / JCM 13030 / NBRC 101832 / S2 / LL)).